The primary structure comprises 74 residues: Protein RALF-like 25 (74 aa).

An N-terminal signal peptide occupies residues methionine 1–alanine 22. 2 cysteine pairs are disulfide-bonded: cysteine 35–cysteine 44 and cysteine 62–cysteine 68.

This sequence belongs to the plant rapid alkalinization factor (RALF) family.

It localises to the secreted. In terms of biological role, cell signaling peptide that may regulate plant stress, growth, and development. Mediates a rapid alkalinization of extracellular space by mediating a transient increase in the cytoplasmic Ca(2+) concentration leading to a calcium-dependent signaling events through a cell surface receptor and a concomitant activation of some intracellular mitogen-activated protein kinases. The protein is Protein RALF-like 25 (RALFL25) of Arabidopsis thaliana (Mouse-ear cress).